A 124-amino-acid chain; its full sequence is Large ribosomal subunit protein bL17 (124 aa).

The protein belongs to the bacterial ribosomal protein bL17 family. In terms of assembly, part of the 50S ribosomal subunit. Contacts protein L32.

This Mycoplasma pneumoniae (strain ATCC 29342 / M129 / Subtype 1) (Mycoplasmoides pneumoniae) protein is Large ribosomal subunit protein bL17.